A 333-amino-acid chain; its full sequence is E3 ubiquitin-protein ligase MIR1 (333 aa).

The RING-CH-type zinc finger occupies 1–60 (MEDEDVPVCWICNEELGNERFRACGCTGELENVHRSCLSTWLTISRNTACQICGVVYNTR). Residues 1 to 82 (MEDEDVPVCW…PRLTYQEGLE (82 aa)) are Cytoplasmic-facing. Residues cysteine 9, cysteine 12, cysteine 24, cysteine 26, histidine 34, cysteine 37, cysteine 50, and cysteine 53 each contribute to the Zn(2+) site. Residues 83–103 (LIVFIFIMTLGAAGLAAATWV) form a helical membrane-spanning segment. Topologically, residues 104-121 (WLYIVGGHDPEIDHVAAA) are extracellular. A helical transmembrane segment spans residues 122 to 142 (AYYVFFVFYQLFVVFGLGAFF). Residues 143 to 333 (HMMRHVGRAY…SAVSSALMFH (191 aa)) are Cytoplasmic-facing. The segment at 187–257 (GDNQDEEGPA…GRDDNVEPTA (71 aa)) is disordered. Residues 195–221 (PAGAAPGDQNGPAGAAPGDQDGPADGA) are compositionally biased toward low complexity. Over residues 235-252 (AGYKEAGEPTHNDGRDDN) the composition is skewed to basic and acidic residues.

In terms of assembly, binds human MHC-I and CD1D.

The protein resides in the host cell membrane. It is found in the host endoplasmic reticulum. It carries out the reaction [E2 ubiquitin-conjugating enzyme]-S-ubiquitinyl-L-cysteine + [acceptor protein]-L-cysteine = [E2 ubiquitin-conjugating enzyme]-L-cysteine + [acceptor protein]-S-ubiquitinyl-L-cysteine.. Its pathway is protein modification; protein ubiquitination. Functionally, membrane-bound E3 ubiquitin ligase expressed during late stages of lytic replication to mediate polyubiquitination of various host membrane proteins related to the immune response. Promotes ubiquitination and subsequent degradation of host MHC-I and CD1D molecules, DC-SIGN and DC-SIGNR, presumably to prevent lysis of infected cells by cytotoxic T-lymphocytes. Binds target molecules through transmembrane interaction. E3 ubiquitin-protein ligases accept ubiquitin from specific E2 ubiquitin-conjugating enzymes, and then transfer it to target protein. The result of this ubiquitination is the enhancement of the endocytosis of the target chain and the delivery to the lysosome, where it is proteolytically destroyed. Induces ubiquitination not only on lysines, but also on cysteine residues. The polypeptide is E3 ubiquitin-protein ligase MIR1 (K3) (Human herpesvirus 8 type P (isolate GK18) (HHV-8)).